The chain runs to 282 residues: Transcription repressor MYB4 (282 aa).

HTH myb-type domains lie at 9 to 61 and 62 to 116; these read KAHT…INYL and RPDL…RRKL. 2 DNA-binding regions (H-T-H motif) span residues 37–61 and 89–112; these read WRSLPKAAGLLRCGKSCRLRWINYL and WSLIAGRLPGRTDNEIKNYWNTHI. A disordered region spans residues 119–145; the sequence is RGIDPTSHRPIQESSASQDSKPTQLEP. Residues 130–145 are compositionally biased toward polar residues; the sequence is QESSASQDSKPTQLEP.

Interacts with BHLH12/MYC1 and BHLH42/TT8. Interacts with SAD2. Widely expressed at low level. Highly expressed in siliques. Weakly expressed in seedlings, young and mature leaves, cauline leaves, stems, flower buds and roots.

It is found in the nucleus. Functionally, transcription repressor involved in regulation of protection against UV. Mediates transcriptional repression of CYP73A5, the gene encoding trans-cinnamate 4-monooxygenase, thereby regulating the accumulation of the UV-protectant compound sinapoylmalate. The sequence is that of Transcription repressor MYB4 (MYB4) from Arabidopsis thaliana (Mouse-ear cress).